The chain runs to 106 residues: Putative membrane protein insertion efficiency factor (106 aa).

This sequence belongs to the UPF0161 family.

It is found in the cell inner membrane. Could be involved in insertion of integral membrane proteins into the membrane. In Acinetobacter baylyi (strain ATCC 33305 / BD413 / ADP1), this protein is Putative membrane protein insertion efficiency factor.